A 268-amino-acid chain; its full sequence is Protein MGF 300-1L (268 aa).

The Cytoplasmic portion of the chain corresponds to Met-1–Asn-175. The helical transmembrane segment at Tyr-176–Tyr-193 threads the bilayer. The Extracellular segment spans residues Thr-194 to Trp-268.

Belongs to the asfivirus MGF 300 family.

It is found in the host membrane. In terms of biological role, plays a role in virus cell tropism, and may be required for efficient virus replication in macrophages. The chain is Protein MGF 300-1L from Ornithodoros (relapsing fever ticks).